The sequence spans 165 residues: uncharacterized protein (165 aa).

The protein belongs to the IIV-6 196R family.

This is an uncharacterized protein from Invertebrate iridescent virus 3 (IIV-3).